We begin with the raw amino-acid sequence, 197 residues long: uncharacterized protein (197 aa).

The tract at residues 1–135 (MKTPWKFLAR…ERGKRANARV (135 aa)) is disordered. A compositionally biased stretch (polar residues) spans 14–32 (RQPSGKTQESSAGNDTGSK). Over residues 83 to 96 (IHADEAQTTARDEA) the composition is skewed to basic and acidic residues. A compositionally biased stretch (basic residues) spans 116 to 132 (SQRKPRIKRRERGKRAN).

It to Rhizobium NGR234A y4nF and y4aO.

This is an uncharacterized protein from Rhizobium meliloti (strain 1021) (Ensifer meliloti).